The primary structure comprises 338 residues: MKLRISSLGPVALLASSMMLAFGAQAASADQGIVIYNAQHENLVKSWVDGFTKDTGIKVTLRNGGDSELGNQLVQEGSASPADVFLTENSPAMVLVDNAKLFAPLDAATLAQVEPQYRPSHGRWIGIAARSTVFVYNPAKLSDAQLPKSLLDLAKPEWKGRWAASPSGADFQAIVSALLELKGEKATLAWLKAMKTNFTAYKGNSTVMKAVNAGQVDSGVIYHYYPFVDGAKTGENSNNIKLYYFKHQDPGAFVSISGGGVLASSKHQQQAQAFIKWITGKQGQEILRTNNAFEYAVGVGAASNPKLVPLKDLDAPKVDAAQLNSKKVVELMTEAGLL.

Positions 1-26 (MKLRISSLGPVALLASSMMLAFGAQA) are cleaved as a signal peptide. Fe cation-binding residues include His-40, Glu-88, Tyr-224, and Tyr-225.

It belongs to the bacterial solute-binding protein 1 family. The complex is composed of two ATP-binding proteins (FbpC), two transmembrane proteins (FbpB) and a solute-binding protein (FbpA).

The protein localises to the periplasm. In terms of biological role, part of the ABC transporter complex FbpABC (TC 3.A.1.10.1) involved in Fe(3+) ions import. This protein specifically binds Fe(3+) and is involved in its transmembrane transport. This chain is Fe(3+)-binding periplasmic protein (fbpA), found in Serratia marcescens.